The following is a 344-amino-acid chain: GTP 3',8-cyclase (344 aa).

One can recognise a Radical SAM core domain in the interval 19–239; it reads PFGRTIDYLR…ANYTLTDLPD (221 aa). Arginine 28 contacts GTP. The [4Fe-4S] cluster site is built by cysteine 35 and cysteine 39. Tyrosine 41 serves as a coordination point for S-adenosyl-L-methionine. Cysteine 42 contributes to the [4Fe-4S] cluster binding site. Arginine 77 provides a ligand contact to GTP. Glycine 81 lines the S-adenosyl-L-methionine pocket. Threonine 111 serves as a coordination point for GTP. Serine 135 is a binding site for S-adenosyl-L-methionine. GTP is bound at residue lysine 171. Residue methionine 205 coordinates S-adenosyl-L-methionine. Positions 268 and 271 each coordinate [4Fe-4S] cluster. A GTP-binding site is contributed by 273–275; it reads RVR. Cysteine 285 serves as a coordination point for [4Fe-4S] cluster.

Belongs to the radical SAM superfamily. MoaA family. Monomer and homodimer. [4Fe-4S] cluster serves as cofactor.

It catalyses the reaction GTP + AH2 + S-adenosyl-L-methionine = (8S)-3',8-cyclo-7,8-dihydroguanosine 5'-triphosphate + 5'-deoxyadenosine + L-methionine + A + H(+). Its pathway is cofactor biosynthesis; molybdopterin biosynthesis. Catalyzes the cyclization of GTP to (8S)-3',8-cyclo-7,8-dihydroguanosine 5'-triphosphate. This Rhodopseudomonas palustris (strain TIE-1) protein is GTP 3',8-cyclase.